A 378-amino-acid chain; its full sequence is Alginate lyase (378 aa).

The first 28 residues, 1-28, serve as a signal peptide directing secretion; it reads MQTPKLIRPTLLSMAILSSMAWATGASA. Residues 67–68, 140–141, and Tyr-258 each bind substrate; these read SK and HT. The tract at residues 359–378 is disordered; sequence LTKVYDPSHEKGDKGDNDGS. The span at 364-378 shows a compositional bias: basic and acidic residues; it reads DPSHEKGDKGDNDGS.

This sequence belongs to the polysaccharide lyase 5 family.

It localises to the periplasm. The enzyme catalyses Eliminative cleavage of alginate to give oligosaccharides with 4-deoxy-alpha-L-erythro-hex-4-enuronosyl groups at their non-reducing ends and beta-D-mannuronate at their reducing end.. In terms of biological role, catalyzes the depolymerization of alginate by cleaving the beta-1,4 glycosidic bond between two adjacent sugar residues via a beta-elimination mechanism. May serve to degrade mislocalized alginate that is trapped in the periplasmic space. This Pseudomonas syringae pv. syringae (strain B728a) protein is Alginate lyase.